A 745-amino-acid polypeptide reads, in one-letter code: F-box only protein 30 (745 aa).

The TRAF-type zinc finger occupies 48–109; it reads EHRLLCPFER…SYADRKSYEN (62 aa). Disordered stretches follow at residues 211–231 and 305–324; these read NTSVPNDMDEQQNARESLEDQ and GDSKQSNLTNGDCVASSDGT. The span at 222–231 shows a compositional bias: basic and acidic residues; sequence QNARESLEDQ. The segment covering 305 to 314 has biased composition (polar residues); it reads GDSKQSNLTN. In terms of domain architecture, F-box spans 610–658; the sequence is NDHLSSLPFEVLQHIAGFLDGFSLCQLSCVSKLMRDVCGSLLQSRGMVI.

In terms of assembly, part of a SCF (SKP1-cullin-F-box) protein ligase complex. Interacts with SKP1, CUL1 and RBX1/ROC1. Post-translationally, auto-ubiquitinated. May be neddylated. Neddylation may be required for E3 ligase activity.

The protein operates within protein modification; protein ubiquitination. Its function is as follows. Substrate-recognition component of the SCF (SKP1-CUL1-F-box protein)-type E3 ubiquitin ligase complex. Required for muscle atrophy following denervation. The sequence is that of F-box only protein 30 (FBXO30) from Homo sapiens (Human).